A 411-amino-acid polypeptide reads, in one-letter code: MITHFRQAIEETLPWLSSFGADPAGGMTRLLYSPEWLETQQQFKKRMAASGLETRFDEVGNLYGRLNGTEYPQEVVLSGSHIDTVVNGGNLDGQFGALAAWLAIDWLKTQYGAPLRTVEVVAMAEEEGSRFPYVFWGSKNIFGLANPDDVRNICDAKGNSFVDAMKACGFTLPNAPLTPRQDIKAFVELHIEQGCVLESNGQSIGVVNAIVGQRRYTVTLNGESNHAGTTPMGYRRDTVYAFSRICHQSVEKAKRMGDPLVLTFGKVEPRPNTVNVVPGKTTFTIDCRHTDAAVLRDFTQQLENDMRAICDEMDIGIDIDLWMDEEPVPMNKELVATLTELCEREKLNYRVMHSGAGHDAQIFAPRVPTCMIFIPSINGISHNPAERTNITDLAEGVKTLALMLYQLAWQK.

Zn(2+)-binding residues include His-81, Asp-92, Glu-127, and His-190. Allantoate contacts are provided by Arg-215, Asn-275, and Arg-288. His-382 provides a ligand contact to Zn(2+).

The protein belongs to the peptidase M20 family. Homodimer. The cofactor is Zn(2+).

It localises to the cytoplasm. The catalysed reaction is allantoate + H2O + 2 H(+) = (S)-2-ureidoglycine + NH4(+) + CO2. It participates in nitrogen metabolism; (S)-allantoin degradation. Its activity is regulated as follows. Sulfate could be an allosteric effector of the enzyme that is responsible for stabilizing substrate binding. In addition, this anion effector may act as a counterion during enzyme-mediated catalysis. In terms of biological role, involved in the anaerobic nitrogen utilization via the assimilation of allantoin. Catalyzes specifically the hydrolysis of allantoate to yield CO2, NH3 and S-ureidoglycine, which is unstable and readily undergoes a second deamination by S-ureidoglycine aminohydrolase AllE to yield S-ureidoglycolate and NH3. In vivo, the spontaneous release of S-ureidoglycolate and ammonia from S-ureidoglycine appears to be too slow to sustain an efficient flux of nitrogen. This Escherichia coli (strain K12) protein is Allantoate amidohydrolase.